Consider the following 623-residue polypeptide: V-type proton ATPase catalytic subunit A (623 aa).

Residue 252 to 259 (GAFGCGKT) participates in ATP binding.

This sequence belongs to the ATPase alpha/beta chains family. In terms of assembly, V-ATPase is a heteromultimeric enzyme composed of a peripheral catalytic V1 complex (main components: subunits A, B, C, D, E, and F) attached to an integral membrane V0 proton pore complex (main component: the proteolipid protein).

The catalysed reaction is ATP + H2O + 4 H(+)(in) = ADP + phosphate + 5 H(+)(out). Its function is as follows. Catalytic subunit of the peripheral V1 complex of vacuolar ATPase. V-ATPase vacuolar ATPase is responsible for acidifying a variety of intracellular compartments in eukaryotic cells. The protein is V-type proton ATPase catalytic subunit A (CVA69.24) of Gossypium hirsutum (Upland cotton).